Here is a 436-residue protein sequence, read N- to C-terminus: 3-ketoacyl-CoA thiolase (436 aa).

Cysteine 99 functions as the Acyl-thioester intermediate in the catalytic mechanism. Catalysis depends on proton acceptor residues histidine 392 and cysteine 422.

This sequence belongs to the thiolase-like superfamily. Thiolase family. In terms of assembly, heterotetramer of two alpha chains (FadJ) and two beta chains (FadI).

The protein resides in the cytoplasm. It carries out the reaction an acyl-CoA + acetyl-CoA = a 3-oxoacyl-CoA + CoA. It functions in the pathway lipid metabolism; fatty acid beta-oxidation. Functionally, catalyzes the final step of fatty acid oxidation in which acetyl-CoA is released and the CoA ester of a fatty acid two carbons shorter is formed. This Shewanella sp. (strain ANA-3) protein is 3-ketoacyl-CoA thiolase.